A 647-amino-acid polypeptide reads, in one-letter code: Beta-galactosidase (647 aa).

The first 24 residues, 1 to 24 (MLRVPLCTPLPLLALLQLLGAAHG), serve as a signal peptide directing secretion. The propeptide occupies 25–29 (IYNVT). Asn27 is a glycosylation site (N-linked (GlcNAc...) asparagine). Tyr84, Glu130, and Asn188 together coordinate substrate. The active-site Proton donor is Glu189. A disulfide bond links Cys196 and Cys231. Residue Asn248 is glycosylated (N-linked (GlcNAc...) asparagine). Glu269 acts as the Nucleophile in catalysis. Residue Tyr334 participates in substrate binding. Asn500, Asn504, Asn510, Asn544, Asn557, and Asn617 each carry an N-linked (GlcNAc...) asparagine glycan. Cysteines 628 and 636 form a disulfide.

The protein belongs to the glycosyl hydrolase 35 family. As to quaternary structure, homodimer. May form higher multimers.

Its subcellular location is the lysosome. The catalysed reaction is Hydrolysis of terminal non-reducing beta-D-galactose residues in beta-D-galactosides.. Its function is as follows. Cleaves beta-linked terminal galactosyl residues from gangliosides, glycoproteins, and glycosaminoglycans. In Mus musculus (Mouse), this protein is Beta-galactosidase (Glb1).